Reading from the N-terminus, the 188-residue chain is MKVAVIYFGGQYNHLIVKDLKYLGLEAVAITPDKSVEELKEFDSVVFGGGPYSVINELDKMGFAPDYVKSLNVPKLGICLGHQLIAKVLGGEVRKANKPEYGLTTVNIVDEDTILRGLKPSIKAWESHNDEVVRPPSGFRILASSENAKVQAMVNNDNSIFGVQFHPEVKHTEKGIEVFKNFIKICRK.

In terms of domain architecture, Glutamine amidotransferase type-1 spans 2–188 (KVAVIYFGGQ…FKNFIKICRK (187 aa)). Cys-79 serves as the catalytic Nucleophile. Residues His-166 and Glu-168 contribute to the active site.

Heterodimer composed of a glutamine amidotransferase subunit (A) and a GMP-binding subunit (B).

The catalysed reaction is XMP + L-glutamine + ATP + H2O = GMP + L-glutamate + AMP + diphosphate + 2 H(+). Its pathway is purine metabolism; GMP biosynthesis; GMP from XMP (L-Gln route): step 1/1. Functionally, catalyzes the synthesis of GMP from XMP. The chain is GMP synthase [glutamine-hydrolyzing] subunit A from Sulfolobus acidocaldarius (strain ATCC 33909 / DSM 639 / JCM 8929 / NBRC 15157 / NCIMB 11770).